The chain runs to 370 residues: Serine O-succinyltransferase (370 aa).

Residues 46 to 355 (AILIVTGLSP…PQGHDAFLVD (310 aa)) enclose the AB hydrolase-1 domain. The segment at 52–55 (GLSP) is important for substrate specificity. Ser149 functions as the Nucleophile in the catalytic mechanism. Arg218 is a binding site for substrate. Residues Asp316 and His349 contribute to the active site. Position 350 (Asp350) interacts with substrate.

Belongs to the AB hydrolase superfamily. MetX family. As to quaternary structure, homodimer.

The protein resides in the cytoplasm. The catalysed reaction is succinyl-CoA + L-serine = O-succinyl-L-serine + CoA. It carries out the reaction L-homoserine + succinyl-CoA = O-succinyl-L-homoserine + CoA. The protein operates within amino-acid biosynthesis; L-cysteine biosynthesis; L-cysteine from L-serine: step 1/2. Functionally, transfers a succinyl group from succinyl-CoA to L-serine, forming succinyl-L-serine. In vitro, also has homoserine succinyl transferase activity. The polypeptide is Serine O-succinyltransferase (Stenotrophomonas maltophilia (Pseudomonas maltophilia)).